A 788-amino-acid chain; its full sequence is Auxin response factor 4 (788 aa).

Positions Met1–Asp19 are enriched in acidic residues. Residues Met1–Ser53 are disordered. Residues Ser38–Ser53 are compositionally biased toward low complexity. Positions Phe177–Ala279 form a DNA-binding region, TF-B3. Residues Leu413–Pro433 are disordered. The PB1 domain occupies Arg665–Lys747.

Belongs to the ARF family. Homodimers and heterodimers. Expressed in the whole plant.

It is found in the nucleus. Auxin response factors (ARFs) are transcriptional factors that bind specifically to the DNA sequence 5'-TGTCTC-3' found in the auxin-responsive promoter elements (AuxREs). Could act as transcriptional activator or repressor. Formation of heterodimers with Aux/IAA proteins may alter their ability to modulate early auxin response genes expression. The protein is Auxin response factor 4 (ARF4) of Arabidopsis thaliana (Mouse-ear cress).